A 385-amino-acid chain; its full sequence is Carbamoyl phosphate synthase small chain (385 aa).

Positions 1 to 196 are CPSase; it reads MEDALGQLAV…KLEKKKKFLF (196 aa). 3 residues coordinate L-glutamine: Ser-51, Gly-245, and Gly-247. In terms of domain architecture, Glutamine amidotransferase type-1 spans 197–384; it reads HIVVYDFGVK…IKLLNQVKFS (188 aa). Cys-273 serves as the catalytic Nucleophile. Residues Leu-274, Gln-277, Asn-315, and Phe-318 each contribute to the L-glutamine site. Catalysis depends on residues His-357 and Glu-359.

Belongs to the CarA family. In terms of assembly, composed of two chains; the small (or glutamine) chain promotes the hydrolysis of glutamine to ammonia, which is used by the large (or ammonia) chain to synthesize carbamoyl phosphate. Tetramer of heterodimers (alpha,beta)4.

The catalysed reaction is hydrogencarbonate + L-glutamine + 2 ATP + H2O = carbamoyl phosphate + L-glutamate + 2 ADP + phosphate + 2 H(+). The enzyme catalyses L-glutamine + H2O = L-glutamate + NH4(+). It functions in the pathway amino-acid biosynthesis; L-arginine biosynthesis; carbamoyl phosphate from bicarbonate: step 1/1. Its pathway is pyrimidine metabolism; UMP biosynthesis via de novo pathway; (S)-dihydroorotate from bicarbonate: step 1/3. In terms of biological role, small subunit of the glutamine-dependent carbamoyl phosphate synthetase (CPSase). CPSase catalyzes the formation of carbamoyl phosphate from the ammonia moiety of glutamine, carbonate, and phosphate donated by ATP, constituting the first step of 2 biosynthetic pathways, one leading to arginine and/or urea and the other to pyrimidine nucleotides. The small subunit (glutamine amidotransferase) binds and cleaves glutamine to supply the large subunit with the substrate ammonia. The sequence is that of Carbamoyl phosphate synthase small chain from Buchnera aphidicola subsp. Schizaphis graminum (strain Sg).